The chain runs to 312 residues: Heme oxygenase 2 (312 aa).

Ser-2 carries the post-translational modification N-acetylserine. At Ser-2 the chain carries Phosphoserine. Residue His-41 participates in heme b binding. HRM repeat units lie at residues 260-265 and 277-282; these read KCPYYA and SCPFRA. Residues Cys-261 and Cys-278 each carry the S-nitrosocysteine modification.

It belongs to the heme oxygenase family. Post-translationally, S-nitrosylated by BLVRB.

The protein localises to the microsome. Its subcellular location is the endoplasmic reticulum. The enzyme catalyses heme b + 3 reduced [NADPH--hemoprotein reductase] + 3 O2 = biliverdin IXalpha + CO + Fe(2+) + 3 oxidized [NADPH--hemoprotein reductase] + 3 H2O + H(+). Functionally, heme oxygenase cleaves the heme ring at the alpha methene bridge to form biliverdin. Biliverdin is subsequently converted to bilirubin by biliverdin reductase. Under physiological conditions, the activity of heme oxygenase is highest in the spleen, where senescent erythrocytes are sequestrated and destroyed. Heme oxygenase 2 could be implicated in the production of carbon monoxide in brain where it could act as a neurotransmitter. In Oryctolagus cuniculus (Rabbit), this protein is Heme oxygenase 2 (HMOX2).